The following is a 140-amino-acid chain: Arsenate reductase ArsI2 (140 aa).

The active-site Nucleophile; cysteine thioarsenate intermediate is C10.

This sequence belongs to the ArsC family.

It carries out the reaction [glutaredoxin]-dithiol + arsenate + glutathione + H(+) = glutathionyl-S-S-[glutaredoxin] + arsenite + H2O. In terms of biological role, catalyzes the reduction of arsenate [As(V)] to arsenite [As(III)]. Does not constitute the major arsenate reductase in cells: essential only in the absence of ArsC (AC P74313). The polypeptide is Arsenate reductase ArsI2 (Synechocystis sp. (strain ATCC 27184 / PCC 6803 / Kazusa)).